A 158-amino-acid polypeptide reads, in one-letter code: Protein shisa-like-2B (158 aa).

The helical transmembrane segment at 65–85 (IGALVGLGIAALVLLAFVISV) threads the bilayer.

It belongs to the shisa family.

The protein localises to the membrane. The sequence is that of Protein shisa-like-2B (Shisal2b) from Mus musculus (Mouse).